Consider the following 366-residue polypeptide: tRNA/tmRNA (uracil-C(5))-methyltransferase (366 aa).

S-adenosyl-L-methionine-binding residues include Gln-187, Tyr-215, Asn-220, Glu-236, and Asp-297. Cys-322 serves as the catalytic Nucleophile. Glu-356 functions as the Proton acceptor in the catalytic mechanism.

Belongs to the class I-like SAM-binding methyltransferase superfamily. RNA M5U methyltransferase family. TrmA subfamily.

It carries out the reaction uridine(54) in tRNA + S-adenosyl-L-methionine = 5-methyluridine(54) in tRNA + S-adenosyl-L-homocysteine + H(+). It catalyses the reaction uridine(341) in tmRNA + S-adenosyl-L-methionine = 5-methyluridine(341) in tmRNA + S-adenosyl-L-homocysteine + H(+). Its function is as follows. Dual-specificity methyltransferase that catalyzes the formation of 5-methyluridine at position 54 (m5U54) in all tRNAs, and that of position 341 (m5U341) in tmRNA (transfer-mRNA). This is tRNA/tmRNA (uracil-C(5))-methyltransferase from Marinomonas sp. (strain MWYL1).